The following is a 244-amino-acid chain: Ribonuclease P protein component 3 (244 aa).

Belongs to the eukaryotic/archaeal RNase P protein component 3 family. Consists of a catalytic RNA component and at least 4-5 protein subunits.

Its subcellular location is the cytoplasm. The enzyme catalyses Endonucleolytic cleavage of RNA, removing 5'-extranucleotides from tRNA precursor.. Functionally, part of ribonuclease P, a protein complex that generates mature tRNA molecules by cleaving their 5'-ends. This chain is Ribonuclease P protein component 3, found in Methanopyrus kandleri (strain AV19 / DSM 6324 / JCM 9639 / NBRC 100938).